We begin with the raw amino-acid sequence, 387 residues long: Probable purine permease 6 (387 aa).

A disordered region spans residues 1–24 (MMELESETQELHLHVNGEPEGKFS). The segment covering 9-24 (QELHLHVNGEPEGKFS) has biased composition (basic and acidic residues). A run of 10 helical transmembrane segments spans residues 36–56 (LRVSLYVTLLLAGETIATLLG), 68–88 (WLETLVQLVGFPLTLPCYYYL), 106–126 (FLTLSLVYIGLGLLVAGHCIL), 129–149 (FGLLYLPVSTFSLISASQLAF), 162–182 (ITPFILNSLVLLTISSTLLVI), 201–221 (YVIGYICAVGSSAGYSLVLSL), 238–258 (ILDMATYPSMVATCVVVVGLF), 283–303 (INIGSTISWQACLIGSVGLII), 309–329 (FSNVISTLCLPVVPVLAVVFF), and 333–353 (MSGIKLVAMFLAIWGFVSYGY). The tract at residues 362-387 (PEEDQELPQSKEEEEQKQVDTIHVQA) is disordered. The segment covering 370 to 381 (QSKEEEEQKQVD) has biased composition (basic and acidic residues).

The protein belongs to the purine permeases (TC 2.A.7.14) family.

The protein localises to the membrane. The chain is Probable purine permease 6 (PUP6) from Arabidopsis thaliana (Mouse-ear cress).